Here is a 458-residue protein sequence, read N- to C-terminus: Argininosuccinate lyase (458 aa).

This sequence belongs to the lyase 1 family. Argininosuccinate lyase subfamily.

Its subcellular location is the cytoplasm. The catalysed reaction is 2-(N(omega)-L-arginino)succinate = fumarate + L-arginine. It functions in the pathway amino-acid biosynthesis; L-arginine biosynthesis; L-arginine from L-ornithine and carbamoyl phosphate: step 3/3. In Salmonella schwarzengrund (strain CVM19633), this protein is Argininosuccinate lyase.